Reading from the N-terminus, the 445-residue chain is DNA repair protein RadA (445 aa).

The C4-type zinc finger occupies 10–27 (CSNCANISNKWSGQCFDC). Residue 90 to 97 (GEPGIGKS) participates in ATP binding. The RadA KNRFG motif motif lies at 249 to 253 (KNRFG). Positions 348 to 445 (EIYLSIAGGL…HLQELKEIIK (98 aa)) are lon-protease-like.

This sequence belongs to the RecA family. RadA subfamily.

Functionally, DNA-dependent ATPase involved in processing of recombination intermediates, plays a role in repairing DNA breaks. Stimulates the branch migration of RecA-mediated strand transfer reactions, allowing the 3' invading strand to extend heteroduplex DNA faster. Binds ssDNA in the presence of ADP but not other nucleotides, has ATPase activity that is stimulated by ssDNA and various branched DNA structures, but inhibited by SSB. Does not have RecA's homology-searching function. The polypeptide is DNA repair protein RadA (Rickettsia prowazekii (strain Madrid E)).